The sequence spans 1246 residues: Superkiller complex protein 2 (1246 aa).

Residues 220-246 (LGGGDEDENEAVGQPGGPRGDTVSASP) form a disordered region. Ser245 and Ser256 each carry phosphoserine. Positions 319–475 (ILHLERHDSV…WIGRLKRRQI (157 aa)) constitute a Helicase ATP-binding domain. 332 to 339 (AHTSAGKT) lines the ATP pocket. The DEVH box signature appears at 423 to 426 (DEVH). The Helicase C-terminal domain maps to 585-755 (GLTSLDLTTS…LTYTMILNLL (171 aa)).

It belongs to the helicase family. SKI2 subfamily. As to quaternary structure, component of the SKI complex which consists of SKIC2, SKIC3 and SKIC8. Interacts with HBS1L isoform 2.

It is found in the nucleus. Its subcellular location is the cytoplasm. The enzyme catalyses ATP + H2O = ADP + phosphate + H(+). Functionally, helicase component of the SKI complex, a multiprotein complex that assists the RNA-degrading exosome during the mRNA decay and quality-control pathways. The SKI complex catalyzes mRNA extraction from 80S ribosomal complexes in the 3'-5' direction and channels mRNA to the cytosolic exosome for degradation. SKI-mediated extraction of mRNA from stalled ribosomes allow binding of the Pelota-HBS1L complex and subsequent ribosome disassembly by ABCE1 for ribosome recycling. In the nucleus, the SKI complex associates with transcriptionally active genes in a manner dependent on PAF1 complex (PAF1C). The protein is Superkiller complex protein 2 of Homo sapiens (Human).